Here is an 856-residue protein sequence, read N- to C-terminus: MALGDKNQGSSKSQAKQKGTKGKNAQPRLKSNQLKRLKINEELKELQSRVDNFVPPSEITLFSELPMSSKTQKGLKSSHFLNPTPIQSLAIPPALQARDILGSAKTGSGKTLAFLIPLLERLYLEKWGPMDGLGAVVISPTRELAVQTFMQLRDIGKYHNFSAGLVIGGKPLKEEQERLGRMNILIATPGRLLQHLDSTVGFDSSAVKVLVLDEADRLLDLGFLPALKAIVSHFSPVQTAPGSRPSRQTLLFSATQSKDLAALAKLSLYEPLYISCNKPGEEGVMPANLEQYYAVVPLERKLDALWGFVKSHLKMKGIVFVTSGKQVRFIFETFRRLHPGLPLMHLHGKQKQPTRLDIFQRFSSSKSALLICTDVAARGLDFPAVDWVIQLDCPDDVDTYIHRVGRTARYQSAGTALTILCPSEEEGMKTRWGEKAIEVKRIKIKEGKMGNLKQSMQNFAFKEPEIKYLGQRAFISYMKSVHIQKDKSIFKIDALPAEAFAESMGLPGAPQIKLGNQKAAKVRGPSKEELARKAEKEEEEEEERAVVGSDEESEEDESEGLGSEDEEEEIDDEAEEIDDEEESGEESGSDEETEEEKDASKPKAPAVRTKYDRMFERKNQSILTPHYTALIAHDADNAAGAGEADDDDDVFTLARRDHNLSDDEEADTDAILGAEALAAELKKPLITSEDLSKRKLKAAASKKGLLKSRPGPEKVLFDEETGEAREFYKSGVDVEKEMSAADKRREYLEKEREIMKIQDKIDKEVAREKKKELKRKRKERERELRQMEMGDEPVAYLGGDDDYASADEGRSLSPSPAPSLEPERHAKKQRRGGVQESGAGDLEDEEALALRLLQGS.

Residues M1 to L34 form a disordered region. Polar residues predominate over residues N7–Q17. The Q motif motif lies at T60 to S88. The region spanning I91–I274 is the Helicase ATP-binding domain. A104 to T111 provides a ligand contact to ATP. Positions D213–D216 match the DEAD box motif. In terms of domain architecture, Helicase C-terminal spans N288–A460. Disordered stretches follow at residues A509–D612 and E768–S856. Residues P525–K536 show a composition bias toward basic and acidic residues. Over residues E537–K597 the composition is skewed to acidic residues. Low complexity predominate over residues S811 to L820.

This sequence belongs to the DEAD box helicase family. DDX10/DBP4 subfamily. As to quaternary structure, interacts with the U3 and U14 snoRNAs. Associates with pre-ribosomal complexes.

The protein localises to the nucleus. The protein resides in the nucleolus. The enzyme catalyses ATP + H2O = ADP + phosphate + H(+). Its function is as follows. ATP-dependent RNA helicase required for ribosome biogenesis. Involved in the release of U14 snoRNA in pre-ribosomal complexes. Required for pre-rRNA cleavage at site A2. The protein is ATP-dependent RNA helicase DBP4 (DBP4) of Cryptococcus neoformans var. neoformans serotype D (strain JEC21 / ATCC MYA-565) (Filobasidiella neoformans).